Reading from the N-terminus, the 334-residue chain is Holliday junction branch migration complex subunit RuvB (334 aa).

Positions 4–186 (ADRLIAPENP…FGITQRLEYY (183 aa)) are large ATPase domain (RuvB-L). ATP contacts are provided by residues Ile25, Arg26, Gly67, Lys70, Thr71, Thr72, 133-135 (EDY), Arg176, Tyr186, and Arg223. Thr71 is a binding site for Mg(2+). Residues 187 to 257 (KIPDLQNIVQ…TADKALNMLD (71 aa)) are small ATPAse domain (RuvB-S). Residues 260–334 (SKGFDYMDRK…RAYLHFGIEK (75 aa)) form a head domain (RuvB-H) region. DNA-binding residues include Arg315 and Arg320.

Belongs to the RuvB family. Homohexamer. Forms an RuvA(8)-RuvB(12)-Holliday junction (HJ) complex. HJ DNA is sandwiched between 2 RuvA tetramers; dsDNA enters through RuvA and exits via RuvB. An RuvB hexamer assembles on each DNA strand where it exits the tetramer. Each RuvB hexamer is contacted by two RuvA subunits (via domain III) on 2 adjacent RuvB subunits; this complex drives branch migration. In the full resolvosome a probable DNA-RuvA(4)-RuvB(12)-RuvC(2) complex forms which resolves the HJ.

The protein localises to the cytoplasm. It catalyses the reaction ATP + H2O = ADP + phosphate + H(+). The RuvA-RuvB-RuvC complex processes Holliday junction (HJ) DNA during genetic recombination and DNA repair, while the RuvA-RuvB complex plays an important role in the rescue of blocked DNA replication forks via replication fork reversal (RFR). RuvA specifically binds to HJ cruciform DNA, conferring on it an open structure. The RuvB hexamer acts as an ATP-dependent pump, pulling dsDNA into and through the RuvAB complex. RuvB forms 2 homohexamers on either side of HJ DNA bound by 1 or 2 RuvA tetramers; 4 subunits per hexamer contact DNA at a time. Coordinated motions by a converter formed by DNA-disengaged RuvB subunits stimulates ATP hydrolysis and nucleotide exchange. Immobilization of the converter enables RuvB to convert the ATP-contained energy into a lever motion, pulling 2 nucleotides of DNA out of the RuvA tetramer per ATP hydrolyzed, thus driving DNA branch migration. The RuvB motors rotate together with the DNA substrate, which together with the progressing nucleotide cycle form the mechanistic basis for DNA recombination by continuous HJ branch migration. Branch migration allows RuvC to scan DNA until it finds its consensus sequence, where it cleaves and resolves cruciform DNA. The sequence is that of Holliday junction branch migration complex subunit RuvB from Vibrio vulnificus (strain YJ016).